The primary structure comprises 183 residues: dTDP-4-dehydrorhamnose 3,5-epimerase (183 aa).

Residues Arg24, Glu29, 48 to 50, and Arg60 contribute to the substrate site; that span reads QDN. The Proton acceptor role is filled by His63. Substrate is bound by residues Lys73 and His120. Tyr133 functions as the Proton donor in the catalytic mechanism. 2 residues coordinate substrate: Glu144 and Lys169.

It belongs to the dTDP-4-dehydrorhamnose 3,5-epimerase family. Homodimer.

It carries out the reaction dTDP-4-dehydro-6-deoxy-alpha-D-glucose = dTDP-4-dehydro-beta-L-rhamnose. The protein operates within carbohydrate biosynthesis; dTDP-L-rhamnose biosynthesis. Its pathway is bacterial outer membrane biogenesis; LPS O-antigen biosynthesis. Catalyzes the epimerization of the C3' and C5'positions of dTDP-6-deoxy-D-xylo-4-hexulose, forming dTDP-6-deoxy-L-lyxo-4-hexulose. The sequence is that of dTDP-4-dehydrorhamnose 3,5-epimerase from Salmonella typhimurium (strain LT2 / SGSC1412 / ATCC 700720).